Here is a 329-residue protein sequence, read N- to C-terminus: Taste receptor type 2 member 102 (329 aa).

Residues 1 to 9 (MNMESVLHN) are Extracellular-facing. Residues 10–30 (FATVLIYVEFIFGNLSNGFIV) traverse the membrane as a helical segment. The Cytoplasmic segment spans residues 31–47 (LSNFLDWVIKQKLSLID). Residues 48-68 (KILLTLAISRITLIWEIYAWF) traverse the membrane as a helical segment. The Extracellular portion of the chain corresponds to 69–85 (KSLYDPSSFLIGIEFQI). Residues 86–108 (IYFSWVLSSHFSLWLATTLSVFY) traverse the membrane as a helical segment. Topologically, residues 109–129 (LLRIANCSWQIFLYLKWRLKQ) are cytoplasmic. The helical transmembrane segment at 130-150 (LIVGMLLGSLVFLLGNLMQSM) threads the bilayer. Topologically, residues 151 to 181 (LEERFYQYGRNTSVNTMSNDLAMWTELIFFN) are extracellular. The N-linked (GlcNAc...) asparagine glycan is linked to Asn161. A helical transmembrane segment spans residues 182–202 (MAMFSVIPFTLALISFLLLIF). At 203–231 (SLWKHLQKMQLISRRHRDPSTKAHMNALR) the chain is on the cytoplasmic side. The chain crosses the membrane as a helical span at residues 232–252 (IMVSFLLLYTMHFLSLLISWI). The Extracellular segment spans residues 253 to 262 (AQKHQSELAD). Residues 263-283 (IIGMITELMYPSVHSCILILG) traverse the membrane as a helical segment. Residues 284 to 329 (NSKLKQTSLCMLRHLRCRLKGENITIAYSNQITSFCVFCVANKSMR) are Cytoplasmic-facing.

The protein belongs to the G-protein coupled receptor T2R family.

The protein resides in the membrane. Its function is as follows. Putative taste receptor which may play a role in the perception of bitterness. This Mus musculus (Mouse) protein is Taste receptor type 2 member 102.